Consider the following 268-residue polypeptide: Ubiquinone biosynthesis protein COQ4 homolog, mitochondrial (268 aa).

Residues 1–25 (MMQRCLRLQKPLALRRGLHLAQVNS) constitute a mitochondrion transit peptide. Zn(2+) contacts are provided by His-171, Asp-172, His-175, and Glu-187.

It belongs to the COQ4 family. Component of a multi-subunit COQ enzyme complex. Zn(2+) serves as cofactor.

The protein localises to the mitochondrion inner membrane. It carries out the reaction a 4-hydroxy-3-methoxy-5-(all-trans-polyprenyl)benzoate + H(+) = a 2-methoxy-6-(all-trans-polyprenyl)phenol + CO2. Its pathway is cofactor biosynthesis; ubiquinone biosynthesis. Functionally, lyase that catalyzes the C1-decarboxylation of 4-hydroxy-3-methoxy-5-(all-trans-polyprenyl)benzoic acid into 2-methoxy-6-(all-trans-polyprenyl)phenol during ubiquinone biosynthesis. The protein is Ubiquinone biosynthesis protein COQ4 homolog, mitochondrial of Drosophila simulans (Fruit fly).